We begin with the raw amino-acid sequence, 80 residues long: MSNKGQLLQDPFLNLLRKEHVPVSIYLVNGIKLQGHIESFDQYVVLLRNTVTQMVYKHAISTVVPGRPVNFHATEAQDSN.

The Sm domain occupies 10–69; that stretch reads DPFLNLLRKEHVPVSIYLVNGIKLQGHIESFDQYVVLLRNTVTQMVYKHAISTVVPGRPV.

It belongs to the Hfq family. In terms of assembly, homohexamer.

RNA chaperone that binds small regulatory RNA (sRNAs) and mRNAs to facilitate mRNA translational regulation in response to envelope stress, environmental stress and changes in metabolite concentrations. Also binds with high specificity to tRNAs. The polypeptide is RNA-binding protein Hfq (Leptothrix cholodnii (strain ATCC 51168 / LMG 8142 / SP-6) (Leptothrix discophora (strain SP-6))).